The primary structure comprises 163 residues: Nucleotide-binding protein GTNG_0630 (163 aa).

It belongs to the YajQ family.

Nucleotide-binding protein. This chain is Nucleotide-binding protein GTNG_0630, found in Geobacillus thermodenitrificans (strain NG80-2).